Consider the following 397-residue polypeptide: LIM/homeobox protein Lhx9 (397 aa).

Residues 40 to 60 (RSKTESRLAKGGQMNGRETNM) are disordered. LIM zinc-binding domains are found at residues 69–130 (ALCA…RFSV) and 131–193 (QRCA…LLQG). Positions 267–326 (TKRMATSFKHHQLRTMKSYFAINHNPDAKDLKQLAQKTGLTKRVLQVWFQNARAKFRRNL) form a DNA-binding region, homeobox. Disordered regions lie at residues 330–363 (ENGG…TTLT) and 378–397 (SNLD…TNLF). The segment covering 353–363 (LTPPGTATTLT) has biased composition (low complexity). Over residues 387–397 (SPSQTTLTNLF) the composition is skewed to polar residues.

The protein localises to the nucleus. May be involved in gonadal development. This Gallus gallus (Chicken) protein is LIM/homeobox protein Lhx9 (LHX9).